Consider the following 42-residue polypeptide: Large ribosomal subunit protein bL36 (42 aa).

It belongs to the bacterial ribosomal protein bL36 family.

The polypeptide is Large ribosomal subunit protein bL36 (Wolbachia pipientis subsp. Culex pipiens (strain wPip)).